The primary structure comprises 271 residues: Protein CDV3 homolog (271 aa).

Over residues 37–47 (KREVVKPKKPE) the composition is skewed to basic and acidic residues. Disordered regions lie at residues 37–151 (KREV…GHGP) and 186–271 (SQQA…DEAS). The segment covering 48-61 (VAAGGVAVVGENEN) has biased composition (low complexity). Residues 73–82 (VEEEWKEFEE) show a composition bias toward acidic residues. The span at 95–114 (QLSTISSARSRTAQESSESQ) shows a compositional bias: polar residues. A Phosphoserine modification is found at serine 134. A compositionally biased stretch (basic and acidic residues) spans 224–242 (RPEEQRKKKNEPAFEEVRH).

It belongs to the CDV3 family.

The sequence is that of Protein CDV3 homolog from Drosophila melanogaster (Fruit fly).